Consider the following 207-residue polypeptide: Holliday junction branch migration complex subunit RuvA (207 aa).

The interval 1–64 is domain I; sequence MIGLINGQVQ…EDAQLLYGFI (64 aa). The segment at 65–143 is domain II; sequence DRKERDVFRQ…NIEVDSSHLE (79 aa). Positions 144-152 are flexible linker; that stretch reads FAMQPAPIS. The segment at 153–207 is domain III; it reads AEGSIIAEVEGALISLGYKEREAQQAIKAAKSNGETFADTQSLLKATLQQFQSFK.

The protein belongs to the RuvA family. Homotetramer. Forms an RuvA(8)-RuvB(12)-Holliday junction (HJ) complex. HJ DNA is sandwiched between 2 RuvA tetramers; dsDNA enters through RuvA and exits via RuvB. An RuvB hexamer assembles on each DNA strand where it exits the tetramer. Each RuvB hexamer is contacted by two RuvA subunits (via domain III) on 2 adjacent RuvB subunits; this complex drives branch migration. In the full resolvosome a probable DNA-RuvA(4)-RuvB(12)-RuvC(2) complex forms which resolves the HJ.

It localises to the cytoplasm. Functionally, the RuvA-RuvB-RuvC complex processes Holliday junction (HJ) DNA during genetic recombination and DNA repair, while the RuvA-RuvB complex plays an important role in the rescue of blocked DNA replication forks via replication fork reversal (RFR). RuvA specifically binds to HJ cruciform DNA, conferring on it an open structure. The RuvB hexamer acts as an ATP-dependent pump, pulling dsDNA into and through the RuvAB complex. HJ branch migration allows RuvC to scan DNA until it finds its consensus sequence, where it cleaves and resolves the cruciform DNA. The polypeptide is Holliday junction branch migration complex subunit RuvA (Psychrobacter cryohalolentis (strain ATCC BAA-1226 / DSM 17306 / VKM B-2378 / K5)).